The chain runs to 370 residues: 4-hydroxy-3-methylbut-2-en-1-yl diphosphate synthase (flavodoxin) (370 aa).

[4Fe-4S] cluster contacts are provided by cysteine 268, cysteine 271, cysteine 303, and glutamate 310.

The protein belongs to the IspG family. [4Fe-4S] cluster is required as a cofactor.

The catalysed reaction is (2E)-4-hydroxy-3-methylbut-2-enyl diphosphate + oxidized [flavodoxin] + H2O + 2 H(+) = 2-C-methyl-D-erythritol 2,4-cyclic diphosphate + reduced [flavodoxin]. The protein operates within isoprenoid biosynthesis; isopentenyl diphosphate biosynthesis via DXP pathway; isopentenyl diphosphate from 1-deoxy-D-xylulose 5-phosphate: step 5/6. Its function is as follows. Converts 2C-methyl-D-erythritol 2,4-cyclodiphosphate (ME-2,4cPP) into 1-hydroxy-2-methyl-2-(E)-butenyl 4-diphosphate. This chain is 4-hydroxy-3-methylbut-2-en-1-yl diphosphate synthase (flavodoxin), found in Bacillus cereus (strain AH187).